Reading from the N-terminus, the 606-residue chain is DNA ligase (606 aa).

Residue Glu263 coordinates ATP. The active-site N6-AMP-lysine intermediate is the Lys265. 6 residues coordinate ATP: Arg270, Arg285, Glu315, Phe355, Arg432, and Lys438.

The protein belongs to the ATP-dependent DNA ligase family. The cofactor is Mg(2+). Mn(2+) is required as a cofactor.

The catalysed reaction is ATP + (deoxyribonucleotide)n-3'-hydroxyl + 5'-phospho-(deoxyribonucleotide)m = (deoxyribonucleotide)n+m + AMP + diphosphate.. The enzyme catalyses ADP + (deoxyribonucleotide)n-3'-hydroxyl + 5'-phospho-(deoxyribonucleotide)m = (deoxyribonucleotide)n+m + AMP + phosphate.. It catalyses the reaction GTP + (deoxyribonucleotide)n-3'-hydroxyl + 5'-phospho-(deoxyribonucleotide)m = (deoxyribonucleotide)n+m + GMP + diphosphate.. Functionally, DNA ligase that seals nicks in double-stranded DNA during DNA replication, DNA recombination and DNA repair. Can use ATP, ADP and GTP, but not CTP, TTP or NAD(+). This is DNA ligase from Sulfophobococcus zilligii.